Consider the following 489-residue polypeptide: UDP-glycosyltransferase 85A1 (489 aa).

UDP-alpha-D-glucose is bound by residues S307, C364–Q366, H381–E389, and F403–Q406.

It belongs to the UDP-glycosyltransferase family. In terms of tissue distribution, expressed in root tips, lateral root initials, root apex, shoots, leaf periphery, leaf primordia and flowers.

Its function is as follows. Involved in the O-glucosylation of trans-zeatin and dihydrozeatin. Also active in vitro on cis-zeatin. Not active on N-glucosylated substrates. The chain is UDP-glycosyltransferase 85A1 (UGT85A1) from Arabidopsis thaliana (Mouse-ear cress).